The following is a 396-amino-acid chain: Elongation factor Tu (396 aa).

The tr-type G domain occupies 10–205; sequence KSHANIGTIG…AVDEYIPTPE (196 aa). The tract at residues 19–26 is G1; it reads GHVDHGKT. 19–26 is a binding site for GTP; it reads GHVDHGKT. Threonine 26 contributes to the Mg(2+) binding site. The tract at residues 61–65 is G2; it reads GITIS. The tract at residues 82-85 is G3; the sequence is DCPG. GTP is bound by residues 82–86 and 137–140; these read DCPGH and NKCD. A G4 region spans residues 137–140; the sequence is NKCD. The interval 175–177 is G5; the sequence is SAL.

The protein belongs to the TRAFAC class translation factor GTPase superfamily. Classic translation factor GTPase family. EF-Tu/EF-1A subfamily. Monomer.

The protein localises to the cytoplasm. The enzyme catalyses GTP + H2O = GDP + phosphate + H(+). In terms of biological role, GTP hydrolase that promotes the GTP-dependent binding of aminoacyl-tRNA to the A-site of ribosomes during protein biosynthesis. The protein is Elongation factor Tu of Bacillus licheniformis (strain ATCC 14580 / DSM 13 / JCM 2505 / CCUG 7422 / NBRC 12200 / NCIMB 9375 / NCTC 10341 / NRRL NRS-1264 / Gibson 46).